A 200-amino-acid polypeptide reads, in one-letter code: GTP cyclohydrolase-2 (200 aa).

Residue 49–53 (RVHSE) coordinates GTP. Zn(2+)-binding residues include Cys-54, Cys-65, and Cys-67. Residues Gln-70, 92–94 (EGR), and Thr-114 contribute to the GTP site. Asp-126 serves as the catalytic Proton acceptor. The Nucleophile role is filled by Arg-128. GTP contacts are provided by Thr-149 and Lys-154.

This sequence belongs to the GTP cyclohydrolase II family. Homodimer. Zn(2+) serves as cofactor.

It catalyses the reaction GTP + 4 H2O = 2,5-diamino-6-hydroxy-4-(5-phosphoribosylamino)-pyrimidine + formate + 2 phosphate + 3 H(+). The protein operates within cofactor biosynthesis; riboflavin biosynthesis; 5-amino-6-(D-ribitylamino)uracil from GTP: step 1/4. Catalyzes the conversion of GTP to 2,5-diamino-6-ribosylamino-4(3H)-pyrimidinone 5'-phosphate (DARP), formate and pyrophosphate. This Klebsiella pneumoniae subsp. pneumoniae (strain ATCC 700721 / MGH 78578) protein is GTP cyclohydrolase-2.